Consider the following 142-residue polypeptide: Lysozyme 2 (142 aa).

A signal peptide spans 1–20 (MLKLTLTILAAVLLVTPAFG). Residues 21 to 142 (KVYTRCSLAR…HTLPSIDDCF (122 aa)) enclose the C-type lysozyme domain. 4 disulfide bridges follow: cysteine 26-cysteine 141, cysteine 47-cysteine 131, cysteine 82-cysteine 98, and cysteine 94-cysteine 112. Glutamate 52 is a catalytic residue. A glycan (N-linked (GlcNAc...) asparagine) is linked at asparagine 66. The active site involves aspartate 70.

Belongs to the glycosyl hydrolase 22 family. Expressed only in the midgut where it is concentrated around the middle in all larval stages.

Its subcellular location is the secreted. The catalysed reaction is Hydrolysis of (1-&gt;4)-beta-linkages between N-acetylmuramic acid and N-acetyl-D-glucosamine residues in a peptidoglycan and between N-acetyl-D-glucosamine residues in chitodextrins.. Lysozymes have primarily a bacteriolytic function. Shows antibacterial activity against Gram-positive bacterium M.luteus but shows no activity against Gram-negative bacterium E.coli. Likely to play a role in the eradication of ingested pathogens during their passage through the intestine. This is Lysozyme 2 from Lucilia sericata (Green bottle fly).